Reading from the N-terminus, the 158-residue chain is MAAGAAGSITTLPALPDDGGGGAFPPGHFKDPKRLYCKNGGFFLRINPDGRVDGVREKSDPHIKLQLQAEERGVVSIKGVSANRFLAMKEDGRLLALKCATEECFFFERLESNNYNTYRSRKYSDWYVALKRTGQYKPGPKTGPGQKAILFLPMSAKS.

A propeptide spanning residues 1-12 (MAAGAAGSITTL) is cleaved from the precursor. Asn39 contributes to the heparin binding site. The heparin-binding stretch occupies residues 131–147 (KRTGQYKPGPKTGPGQK).

The protein belongs to the heparin-binding growth factors family.

The protein resides in the secreted. The protein localises to the nucleus. In terms of biological role, acts as a ligand for FGFR1, FGFR2, FGFR3 and FGFR4. Also acts as an integrin ligand which is required for FGF2 signaling. Plays an important role in the regulation of cell survival, cell division, cell differentiation and cell migration. Functions as a potent mitogen in vitro. Can induce angiogenesis. The chain is Fibroblast growth factor 2 (FGF2) from Gallus gallus (Chicken).